The primary structure comprises 258 residues: NAD kinase (258 aa).

Residue aspartate 45 is the Proton acceptor of the active site. NAD(+)-binding positions include 45–46, 117–118, aspartate 147, alanine 155, 158–163, and alanine 182; these read DG, NE, and TAYNYS.

This sequence belongs to the NAD kinase family. A divalent metal cation is required as a cofactor.

Its subcellular location is the cytoplasm. The enzyme catalyses NAD(+) + ATP = ADP + NADP(+) + H(+). Its function is as follows. Involved in the regulation of the intracellular balance of NAD and NADP, and is a key enzyme in the biosynthesis of NADP. Catalyzes specifically the phosphorylation on 2'-hydroxyl of the adenosine moiety of NAD to yield NADP. This is NAD kinase from Xanthomonas oryzae pv. oryzae (strain MAFF 311018).